Reading from the N-terminus, the 495-residue chain is uncharacterized protein (495 aa).

In terms of domain architecture, TRAM spans 16-74 (SSKRGDLIELAVTALDEDGNGIGTHDGTNVHVIGALPDERVRARLTHVGKRHLHAEAVE). [4Fe-4S] cluster-binding residues include cysteine 88, cysteine 94, cysteine 97, and cysteine 175. S-adenosyl-L-methionine contacts are provided by glutamine 299, tyrosine 328, glutamate 349, and asparagine 397. Residue cysteine 424 is the Nucleophile of the active site. Residues 472-483 (DRLESPAKERSR) show a composition bias toward basic and acidic residues. The interval 472-495 (DRLESPAKERSRPRASHKAKGGAV) is disordered. A compositionally biased stretch (basic residues) spans 484 to 495 (PRASHKAKGGAV).

Belongs to the class I-like SAM-binding methyltransferase superfamily. RNA M5U methyltransferase family.

This is an uncharacterized protein from Geobacter sulfurreducens (strain ATCC 51573 / DSM 12127 / PCA).